A 248-amino-acid chain; its full sequence is MSEQQVQELEKKWYALQVEPGKENEAKENLLKVLELEGLKDLVDEVIVPAEEKVVIRAQGKEKYRLSLKGNARDISVLGKKGVTTFRIENGEVKVVESVEGDTCVNAPPISKPGQKITCKENKTEAKIVLDNKIFPGYILIKAHMNDKLLMAIEKTPHVFRPVMVGGKPVPLKEEEVQNILNQIKRGVKPSKVEFEKGDQVRVIEGPFMNFTGTVEEVHPEKRKLTVMISIFGRMTPVELDFDQVEKI.

In terms of domain architecture, KOW spans 197–227 (KGDQVRVIEGPFMNFTGTVEEVHPEKRKLTV).

Belongs to the NusG family. As to quaternary structure, monomer. Homodimer.

Participates in transcription elongation, termination and antitermination. This chain is Transcription termination/antitermination protein NusG, found in Aquifex aeolicus (strain VF5).